The primary structure comprises 238 residues: MVTPHINAKKGDFSDCVLMPGDPLRARYIAKNYLKNAIEVTNIRSMLGYTGRYKGHRISVMSHGIGIPSSLIYVKELVSEYNVKKIIRIGTCGTVIEHININDIIICLGASTDSKVNRLRFHDNDFSSVADFYLILDLFNSANNAGIKINIGNFFTTDLFYVKNDKLLDTLQRYNILGIDMETAGIYSLASELGIQVASICTVSDHILKKDQMSYIDRESNLNNMIYISLEALILKKV.

H5 contributes to the a purine D-ribonucleoside binding site. Residues G21, R25, R44, and 88–91 (RIGT) each bind phosphate. A purine D-ribonucleoside contacts are provided by residues 180 to 182 (DME) and 204 to 205 (SD). Residue D205 is the Proton donor of the active site.

The protein belongs to the PNP/UDP phosphorylase family. Homohexamer; trimer of homodimers.

It catalyses the reaction a purine D-ribonucleoside + phosphate = a purine nucleobase + alpha-D-ribose 1-phosphate. The enzyme catalyses a purine 2'-deoxy-D-ribonucleoside + phosphate = a purine nucleobase + 2-deoxy-alpha-D-ribose 1-phosphate. Functionally, catalyzes the reversible phosphorolytic breakdown of the N-glycosidic bond in the beta-(deoxy)ribonucleoside molecules, with the formation of the corresponding free purine bases and pentose-1-phosphate. The protein is Purine nucleoside phosphorylase DeoD-type of Buchnera aphidicola subsp. Baizongia pistaciae (strain Bp).